Reading from the N-terminus, the 539-residue chain is uncharacterized protein (539 aa).

ABC transporter domains lie at 8 to 265 (VRIT…SRAL) and 307 to 537 (IELD…IGDM). Residue 339 to 346 (GDNGSGKS) coordinates ATP.

It belongs to the ABC transporter superfamily.

It localises to the mitochondrion. This is an uncharacterized protein from Saccharomyces cerevisiae (strain ATCC 204508 / S288c) (Baker's yeast).